The primary structure comprises 78 residues: UPF0291 protein Exig_1097 (78 aa).

The interval 57-78 (EEGTDVTPEKLKQAQEEERNKQ) is disordered. Residues 63–78 (TPEKLKQAQEEERNKQ) are compositionally biased toward basic and acidic residues.

Belongs to the UPF0291 family.

It is found in the cytoplasm. The sequence is that of UPF0291 protein Exig_1097 from Exiguobacterium sibiricum (strain DSM 17290 / CCUG 55495 / CIP 109462 / JCM 13490 / 255-15).